Here is a 196-residue protein sequence, read N- to C-terminus: Glutathione-specific gamma-glutamylcyclotransferase 1 (196 aa).

Substrate is bound at residue 15–20 (IFGYGS). E95 serves as the catalytic Proton acceptor.

It belongs to the gamma-glutamylcyclotransferase family. ChaC subfamily.

Its subcellular location is the cytoplasm. It is found in the cytosol. It localises to the golgi apparatus. The protein resides in the trans-Golgi network. It carries out the reaction glutathione = L-cysteinylglycine + 5-oxo-L-proline. In terms of biological role, catalyzes the cleavage of glutathione into 5-oxo-L-proline and a Cys-Gly dipeptide. Acts specifically on glutathione, but not on other gamma-glutamyl peptides. Glutathione depletion is an important factor for apoptosis initiation and execution. Acts as a pro-apoptotic component of the unfolded protein response pathway by mediating the pro-apoptotic effects of the ATF4-ATF3-DDIT3/CHOP cascade. Negative regulator of Notch signaling pathway involved in embryonic neurogenesis: acts by inhibiting Notch cleavage by furin, maintaining Notch in an immature inactive form, thereby promoting neurogenesis in embryos. This Danio rerio (Zebrafish) protein is Glutathione-specific gamma-glutamylcyclotransferase 1.